Here is a 468-residue protein sequence, read N- to C-terminus: Zinc finger protein mex-5 (468 aa).

Low complexity predominate over residues 1-19 (MKAASNSVSSAGGSVSPTT). Residues 1 to 32 (MKAASNSVSSAGGSVSPTTTQPPLPPGQSSHP) are disordered. T186 bears the Phosphothreonine; by mbk-2 mark. Over residues 243–254 (NHFHEHRGEKFG) the composition is skewed to basic and acidic residues. The segment at 243–269 (NHFHEHRGEKFGRRGFPIPETDSQQPP) is disordered. 2 consecutive C3H1-type zinc fingers follow at residues 270 to 299 (NYKTRLCMMHASGIKPCDMGARCKFAHGLK) and 314 to 344 (KYKTKLCKNFARGGTGFCPYGLRCEFVHPTD). The disordered stretch occupies residues 414–468 (DLQAGGDYNQPESNEDDLPPHLRRNRRENPPMNKRRTSLSTKWTSEENLGLRGHY). Residues 451 to 460 (SLSTKWTSEE) show a composition bias toward polar residues. A Phosphoserine modification is found at S458.

Interacts (when phosphorylated on Thr-186) with plk-1 (via POLO box domain) and plk-2 (via POLO box domain). Phosphorylation on Ser-458 by par-1 promotes localization of the protein to the anterior cytoplasm of the zygote. Phosphorylation by mbk-1 appears to be required for subsequent phosphorylation by plk-1. As to expression, asymmetrically localized to the anterior of the zygote before mitotic division, then differentially distributed to the somatic blastomere precursor cells.

It is found in the cytoplasm. Functions with mex-6 to affect embryonic viability, establish soma germline asymmetry in embryos and establish plk-1, pie-1, mex-1, and pos-1 asymmetry in embryos. Also affects formation of intestinal cells. Binds to mRNA in vitro, and inhibits pgl-3-mediated P-granule formation, probably by competing with pgl-3 for binding to mRNA. Required for neg-1 expression in anterior blastomeres during embryogenesis. The sequence is that of Zinc finger protein mex-5 from Caenorhabditis elegans.